The following is a 565-amino-acid chain: Heme/hemopexin transporter protein HuxB (565 aa).

A signal peptide spans 1–26 (MKMRPRYSVIASAVSLGFVLSKSVMA). A POTRA domain is found at 73 to 150 (FPLKQVQILD…GTVKILLLKG (78 aa)).

Belongs to the TPS (TC 1.B.20) family.

The protein localises to the cell outer membrane. In terms of biological role, likely functions in the release of soluble HxuA from the cell. Probable member of a two partner secretion pathway (TPS) in which it mediates the secretion of HuxA. This Haemophilus influenzae (strain ATCC 51907 / DSM 11121 / KW20 / Rd) protein is Heme/hemopexin transporter protein HuxB (hxuB).